Reading from the N-terminus, the 162-residue chain is Caveolin-2 (162 aa).

Residues 1-86 (MGLETEKADV…FEISKYVVYK (86 aa)) are Cytoplasmic-facing. Tyrosine 19 carries the phosphotyrosine; by SRC modification. Residues serine 20 and serine 23 each carry the phosphoserine modification. Tyrosine 27 is modified (phosphotyrosine; by SRC). Residue serine 36 is modified to Phosphoserine. Residues 87–107 (FLTVFLAIPLAFAAGILFATL) constitute an intramembrane region (helical). Residues 108–162 (SCLHIWIIMPFVKTCLMVLPSVQTVWKTVTDVVIAPLCASVGRSFSSVSLQLSHD) are Cytoplasmic-facing.

Belongs to the caveolin family. In terms of assembly, monomer or homodimer. Interacts with CAV1; the interaction forms a stable heterooligomeric complex that is required for targeting to lipid rafts and for caveolae formation. Tyrosine phosphorylated forms do not form heterooligomers with the Tyr-19-phosphorylated form existing as a monomer or dimer, and the Tyr-27-form as a monomer only. Interacts (tyrosine phosphorylated form) with the SH2 domain-containing proteins, RASA1, NCK1 and SRC. Interacts (tyrosine phosphorylated form) with INSR, the interaction (Tyr-27-phosphorylated form) is increased on insulin stimulation. Interacts (Tyr-19 phosphorylated form) with MAPK1 (phosphorylated form); the interaction, promoted by insulin, leads to nuclear location and MAPK1 activation. Interacts with STAT3; the interaction is increased on insulin-induced tyrosine phosphorylation leading to STAT activation. In terms of processing, phosphorylated on serine and tyrosine residues. CAV1 promotes phosphorylation on Ser-23 which then targets the complex to the plasma membrane, lipid rafts and caveolae. Phosphorylation on Ser-36 appears to modulate mitosis in endothelial cells. Phosphorylation on both Tyr-19 and Tyr-27 is required for insulin-induced 'Ser-727' phosphorylation of STAT3 and its activation. Phosphorylation on Tyr-19 is required for insulin-induced phosphorylation of MAPK1 and DNA binding of STAT3. Tyrosine phosphorylation is induced by both EGF and insulin (By. similarity).

The protein localises to the nucleus. It is found in the cytoplasm. Its subcellular location is the golgi apparatus membrane. It localises to the cell membrane. The protein resides in the membrane. The protein localises to the caveola. Its function is as follows. May act as a scaffolding protein within caveolar membranes. Interacts directly with G-protein alpha subunits and can functionally regulate their activity. Acts as an accessory protein in conjunction with CAV1 in targeting to lipid rafts and driving caveolae formation. The Ser-36 phosphorylated form has a role in modulating mitosis in endothelial cells. Positive regulator of cellular mitogenesis of the MAPK signaling pathway. Required for the insulin-stimulated nuclear translocation and activation of MAPK1 and STAT3, and the subsequent regulation of cell cycle progression. This Loxodonta africana (African elephant) protein is Caveolin-2 (CAV2).